A 278-amino-acid polypeptide reads, in one-letter code: Putative protein-disulfide oxidoreductase RF_0032 (278 aa).

The first 18 residues, 1 to 18 (MRSIFIVPIFLLFLSSCS), serve as a signal peptide directing secretion. The tract at residues 62–84 (VPANDNNQTDEVSTPPSQEQKNP) is disordered. Residues 65–81 (NDNNQTDEVSTPPSQEQ) are compositionally biased toward polar residues. Positions 77 to 266 (PSQEQKNPEI…ISTAVDKALE (190 aa)) constitute a Thioredoxin domain. A disulfide bridge links C119 with C122.

The protein belongs to the thioredoxin family. DsbA subfamily.

The protein localises to the periplasm. In terms of biological role, may be required for disulfide bond formation in some proteins. This chain is Putative protein-disulfide oxidoreductase RF_0032, found in Rickettsia felis (strain ATCC VR-1525 / URRWXCal2) (Rickettsia azadi).